A 595-amino-acid polypeptide reads, in one-letter code: Flap endonuclease 1 (595 aa).

An N-domain region spans residues 1–106; the sequence is MGIKGLTKFI…SELEKRGEKR (106 aa). Mg(2+) is bound at residue D34. 2 residues coordinate DNA: R47 and R72. Mg(2+)-binding residues include D88, E160, E162, D181, and D183. Residues 124 to 267 form an I-domain region; sequence EIKKQSGRTV…KTAYNLIKEY (144 aa). Residue E160 participates in DNA binding. 2 residues coordinate DNA: G245 and D247. Position 247 (D247) interacts with Mg(2+). Residues 350–358 form an interaction with PCNA region; sequence TQRRLDNFF. The interval 370 to 493 is disordered; that stretch reads NEESQIKKEV…TGDVYSFPNG (124 aa). Polar residues predominate over residues 392–401; that stretch reads NDSSTKLNSK. Residues 406–425 show a composition bias toward basic and acidic residues; it reads PKGEKESKTEKDDGDTHNGN. Residues 426–436 are compositionally biased toward acidic residues; it reads DNEEEGGEGET. A compositionally biased stretch (basic and acidic residues) spans 461–475; sequence HKSDSESGNVKKEST.

It belongs to the XPG/RAD2 endonuclease family. FEN1 subfamily. In terms of assembly, interacts with PCNA. Three molecules of FEN1 bind to one PCNA trimer with each molecule binding to one PCNA monomer. PCNA stimulates the nuclease activity without altering cleavage specificity. It depends on Mg(2+) as a cofactor. In terms of processing, phosphorylated. Phosphorylation upon DNA damage induces relocalization to the nuclear plasma.

Its subcellular location is the nucleus. The protein localises to the nucleolus. It localises to the nucleoplasm. It is found in the mitochondrion. Functionally, structure-specific nuclease with 5'-flap endonuclease and 5'-3' exonuclease activities involved in DNA replication and repair. During DNA replication, cleaves the 5'-overhanging flap structure that is generated by displacement synthesis when DNA polymerase encounters the 5'-end of a downstream Okazaki fragment. It enters the flap from the 5'-end and then tracks to cleave the flap base, leaving a nick for ligation. Also involved in the long patch base excision repair (LP-BER) pathway, by cleaving within the apurinic/apyrimidinic (AP) site-terminated flap. Acts as a genome stabilization factor that prevents flaps from equilibrating into structures that lead to duplications and deletions. Also possesses 5'-3' exonuclease activity on nicked or gapped double-stranded DNA, and exhibits RNase H activity. Also involved in replication and repair of rDNA and in repairing mitochondrial DNA. This Plasmodium knowlesi (strain H) protein is Flap endonuclease 1.